A 619-amino-acid chain; its full sequence is DNA mismatch repair protein MutL (619 aa).

The interval 339–400 (AEKDDPPAPR…GGASWPHAQP (62 aa)) is disordered.

The protein belongs to the DNA mismatch repair MutL/HexB family.

This protein is involved in the repair of mismatches in DNA. It is required for dam-dependent methyl-directed DNA mismatch repair. May act as a 'molecular matchmaker', a protein that promotes the formation of a stable complex between two or more DNA-binding proteins in an ATP-dependent manner without itself being part of a final effector complex. This Klebsiella pneumoniae subsp. pneumoniae (strain ATCC 700721 / MGH 78578) protein is DNA mismatch repair protein MutL.